Consider the following 559-residue polypeptide: Dihydroxy-acid dehydratase 2 (559 aa).

A [2Fe-2S] cluster-binding site is contributed by Cys-53. Asp-85 is a Mg(2+) binding site. [2Fe-2S] cluster is bound at residue Cys-126. Residues Asp-127 and Lys-128 each coordinate Mg(2+). Lys-128 bears the N6-carboxylysine mark. Cys-195 provides a ligand contact to [2Fe-2S] cluster. Glu-446 is a Mg(2+) binding site. The Proton acceptor role is filled by Ser-472.

It belongs to the IlvD/Edd family. Homodimer. [2Fe-2S] cluster serves as cofactor. Requires Mg(2+) as cofactor.

It catalyses the reaction (2R)-2,3-dihydroxy-3-methylbutanoate = 3-methyl-2-oxobutanoate + H2O. It carries out the reaction (2R,3R)-2,3-dihydroxy-3-methylpentanoate = (S)-3-methyl-2-oxopentanoate + H2O. Its pathway is amino-acid biosynthesis; L-isoleucine biosynthesis; L-isoleucine from 2-oxobutanoate: step 3/4. The protein operates within amino-acid biosynthesis; L-valine biosynthesis; L-valine from pyruvate: step 3/4. Functionally, functions in the biosynthesis of branched-chain amino acids. Catalyzes the dehydration of (2R,3R)-2,3-dihydroxy-3-methylpentanoate (2,3-dihydroxy-3-methylvalerate) into 2-oxo-3-methylpentanoate (2-oxo-3-methylvalerate) and of (2R)-2,3-dihydroxy-3-methylbutanoate (2,3-dihydroxyisovalerate) into 2-oxo-3-methylbutanoate (2-oxoisovalerate), the penultimate precursor to L-isoleucine and L-valine, respectively. This Pseudoalteromonas translucida (strain TAC 125) protein is Dihydroxy-acid dehydratase 2.